Consider the following 335-residue polypeptide: dTDP-glucose 4,6-dehydratase (335 aa).

NAD(+) contacts are provided by residues 11–12, 38–41, 61–62, 81–85, and Thr100; these read FI, DKLT, DI, and FAAET. Residue Thr85 coordinates substrate. Thr125 lines the substrate pocket. The active-site Proton donor is the Asp126. Residues Glu127 and Tyr149 each act as proton acceptor in the active site. An NAD(+)-binding site is contributed by 149-153; the sequence is YSASK. Asn178 contributes to the substrate binding site. Asn179 provides a ligand contact to NAD(+). Residues 188–189, 204–206, Arg213, Asn248, and 271–275 contribute to the substrate site; these read KI, PLY, and DRKGH.

Belongs to the NAD(P)-dependent epimerase/dehydratase family. dTDP-glucose dehydratase subfamily. NAD(+) is required as a cofactor.

It catalyses the reaction dTDP-alpha-D-glucose = dTDP-4-dehydro-6-deoxy-alpha-D-glucose + H2O. It functions in the pathway antibiotic biosynthesis. Functionally, involved in the biosynthesis of the two 2,6-deoxysugars, dTDP-L-oleandrose and dTDP-D-desosamine, attached to the macrolactone ring oleandolide to produce the aglycone antibiotic oleandomycin. Catalyzes the dehydration of dTDP-D-glucose to form dTDP-6-deoxy-D-xylo-4-hexulose via a three-step process involving oxidation, dehydration and reduction. This is dTDP-glucose 4,6-dehydratase from Streptomyces antibioticus.